The primary structure comprises 475 residues: Putative aldehyde dehydrogenase SSP0762 (475 aa).

Residue 201 to 207 (GDGQGVG) coordinates NAD(+). Catalysis depends on residues E245 and C279.

Belongs to the aldehyde dehydrogenase family.

It carries out the reaction an aldehyde + NAD(+) + H2O = a carboxylate + NADH + 2 H(+). The protein is Putative aldehyde dehydrogenase SSP0762 of Staphylococcus saprophyticus subsp. saprophyticus (strain ATCC 15305 / DSM 20229 / NCIMB 8711 / NCTC 7292 / S-41).